The primary structure comprises 148 residues: MLRKLAAVSLLSLLSAPLLAAECSVDIQGNDQMQFNTNAITVDKSCKQFTVNLSHPGNLPKNVMGHNWVLSTAADMQGVVTDGMASGLDKDYLKPDDSRVIAHTKLIGSGEKDSVTFDVSKLKEGEQYMFFCTFPGHSALMKGTLTLK.

The first 20 residues, 1 to 20, serve as a signal peptide directing secretion; it reads MLRKLAAVSLLSLLSAPLLA. A Plastocyanin-like domain is found at 21–148; it reads AECSVDIQGN…ALMKGTLTLK (128 aa). Cysteine 23 and cysteine 46 are oxidised to a cystine. Positions 66, 132, 137, and 141 each coordinate Cu cation.

It is found in the periplasm. Its function is as follows. Transfers electrons from cytochrome c551 to cytochrome oxidase. In Pseudomonas aeruginosa (strain ATCC 15692 / DSM 22644 / CIP 104116 / JCM 14847 / LMG 12228 / 1C / PRS 101 / PAO1), this protein is Azurin (azu).